The primary structure comprises 325 residues: DNA-directed RNA polymerase subunit alpha (325 aa).

The alpha N-terminal domain (alpha-NTD) stretch occupies residues 1–231 (MQTSLLKPKI…DQLSVFAALE (231 aa)). Residues 246-325 (IDPILLRPVD…ENWPPAGLDK (80 aa)) form an alpha C-terminal domain (alpha-CTD) region.

Belongs to the RNA polymerase alpha chain family. In terms of assembly, homodimer. The RNAP catalytic core consists of 2 alpha, 1 beta, 1 beta' and 1 omega subunit. When a sigma factor is associated with the core the holoenzyme is formed, which can initiate transcription.

The enzyme catalyses RNA(n) + a ribonucleoside 5'-triphosphate = RNA(n+1) + diphosphate. DNA-dependent RNA polymerase catalyzes the transcription of DNA into RNA using the four ribonucleoside triphosphates as substrates. The protein is DNA-directed RNA polymerase subunit alpha of Paraburkholderia phytofirmans (strain DSM 17436 / LMG 22146 / PsJN) (Burkholderia phytofirmans).